Reading from the N-terminus, the 271-residue chain is Tryptophan synthase alpha chain (271 aa).

Residues E49 and D60 each act as proton acceptor in the active site.

Belongs to the TrpA family. Tetramer of two alpha and two beta chains.

It catalyses the reaction (1S,2R)-1-C-(indol-3-yl)glycerol 3-phosphate + L-serine = D-glyceraldehyde 3-phosphate + L-tryptophan + H2O. The protein operates within amino-acid biosynthesis; L-tryptophan biosynthesis; L-tryptophan from chorismate: step 5/5. The alpha subunit is responsible for the aldol cleavage of indoleglycerol phosphate to indole and glyceraldehyde 3-phosphate. In Leptothrix cholodnii (strain ATCC 51168 / LMG 8142 / SP-6) (Leptothrix discophora (strain SP-6)), this protein is Tryptophan synthase alpha chain.